Consider the following 185-residue polypeptide: Photosystem I assembly protein Ycf4 (185 aa).

The next 2 helical transmembrane spans lie at 20–40 and 57–77; these read GNFF…AVGA and ILFF…LFIS.

This sequence belongs to the Ycf4 family.

The protein localises to the plastid. Its subcellular location is the chloroplast thylakoid membrane. Seems to be required for the assembly of the photosystem I complex. In Sorghum bicolor (Sorghum), this protein is Photosystem I assembly protein Ycf4.